The chain runs to 72 residues: Small ribosomal subunit protein bS20 (72 aa).

The protein belongs to the bacterial ribosomal protein bS20 family.

Binds directly to 16S ribosomal RNA. The polypeptide is Small ribosomal subunit protein bS20 (rpsT) (Aeromonas salmonicida).